The primary structure comprises 196 residues: Vascular-related unknown protein 2 (196 aa).

Positions A84–K130 are disordered. Residues E103–T121 show a composition bias toward acidic residues.

Functionally, involved in the regulation of plant growth. The polypeptide is Vascular-related unknown protein 2 (Arabidopsis thaliana (Mouse-ear cress)).